The sequence spans 362 residues: Serpentine receptor class delta-2 (362 aa).

A run of 7 helical transmembrane segments spans residues 27–47, 57–77, 104–124, 144–164, 209–229, 264–284, and 292–312; these read LSCL…YLIW, YAIY…ISFF, FCYF…WILL, LIRN…VYVF, LISI…ILYF, GIPI…FGII, and ITFR…IIFV.

Belongs to the nematode receptor-like protein srd family.

It localises to the membrane. Thought to be a chemosensory receptor. The polypeptide is Serpentine receptor class delta-2 (srd-2) (Caenorhabditis elegans).